The chain runs to 136 residues: NADH-ubiquinone oxidoreductase chain 3 (136 aa).

Helical transmembrane passes span 5 to 25, 55 to 75, and 85 to 105; these read TFFL…NLIF, ISFF…LLVY, and GIYG…GFAF.

The protein belongs to the complex I subunit 3 family.

Its subcellular location is the mitochondrion membrane. It catalyses the reaction a ubiquinone + NADH + 5 H(+)(in) = a ubiquinol + NAD(+) + 4 H(+)(out). Functionally, core subunit of the mitochondrial membrane respiratory chain NADH dehydrogenase (Complex I) that is believed to belong to the minimal assembly required for catalysis. Complex I functions in the transfer of electrons from NADH to the respiratory chain. The immediate electron acceptor for the enzyme is believed to be ubiquinone. This chain is NADH-ubiquinone oxidoreductase chain 3 (nd3), found in Emericella nidulans (Aspergillus nidulans).